Consider the following 584-residue polypeptide: Transcription factor 7-like 1 (584 aa).

The span at 1 to 28 (MPQLGGGRGGAGGGGGGSGAGATSGGDD) shows a compositional bias: gly residues. Residues 1–71 (MPQLGGGRGG…VKSSLVNESE (71 aa)) are CTNNB1-binding. Disordered regions lie at residues 1–99 (MPQL…RDYF), 159–179 (ATVKDTRSPSPAHLSNKVPVV), and 194–231 (YSNDHFSPASPPTHLSPEIDPKTGIPRPPHPSELSPYY). A compositionally biased stretch (low complexity) spans 64–78 (SSLVNESENQSSSSD). Positions 80 to 99 (EAERRPQPARDAFQKPRDYF) are enriched in basic and acidic residues. Positions 342–410 (VKKPLNAFML…LHAQLYPTWS (69 aa)) form a DNA-binding region, HMG box. The disordered stretch occupies residues 412-501 (RDNYGKKKKR…HSEQAQPLSL (90 aa)). The Nuclear localization signal signature appears at 417–423 (KKKKRKR). Composition is skewed to low complexity over residues 427 to 437 (LSQTQSQQQIQ) and 470 to 491 (SALDSPATPSAALASPAAPAAT). A compositionally biased stretch (polar residues) spans 492–501 (HSEQAQPLSL).

Belongs to the TCF/LEF family. Binds the armadillo repeat of CTNNB1 and forms a stable complex. Interacts with DAZAP2. In terms of tissue distribution, detected in the basal layer of epidermis and in outer root sheath and bulge of hair follicles.

The protein resides in the nucleus. Participates in the Wnt signaling pathway. Binds to DNA and acts as a repressor in the absence of CTNNB1, and as an activator in its presence. Necessary for the terminal differentiation of epidermal cells, the formation of keratohyalin granules and the development of the barrier function of the epidermis. This is Transcription factor 7-like 1 (Tcf7l1) from Mus musculus (Mouse).